The sequence spans 168 residues: Siroheme decarboxylase NirH subunit (168 aa).

This sequence belongs to the Ahb/Nir family. In terms of assembly, probably forms a complex composed of NirD, NirL, NirG and NirH. All proteins are required for the total conversion of siroheme to didecarboxysiroheme.

The catalysed reaction is siroheme + 2 H(+) = 12,18-didecarboxysiroheme + 2 CO2. It functions in the pathway porphyrin-containing compound metabolism. Functionally, involved in heme d1 biosynthesis. Catalyzes the decarboxylation of siroheme into didecarboxysiroheme. The protein is Siroheme decarboxylase NirH subunit of Stutzerimonas stutzeri (Pseudomonas stutzeri).